Reading from the N-terminus, the 442-residue chain is Inhibitor of Apoptosis OPG037 (442 aa).

ANK repeat units lie at residues 67–96 (DGNY…DPNA), 100–131 (HNKT…KINN), 203–233 (DGNT…DVNK), 237–267 (FGDS…VITD), 292–321 (YDST…ICED), and 323–347 (MYYA…SVDS).

The protein belongs to the orthopoxvirus OPG037 family. May interact with host caspase-9-Apaf-1 complex.

It localises to the host cytoplasm. In terms of biological role, inhibits host apoptosis. Acts by associating with host apoptosome. In Monkeypox virus, this protein is Inhibitor of Apoptosis OPG037 (OPG037).